The chain runs to 69 residues: Conopeptide Y-Pl1 (69 aa).

Residues M1–P20 form the signal peptide. Positions Q21–Y69 are excised as a propeptide.

This sequence belongs to the conotoxin M superfamily. Conopeptide Y family. As to expression, expressed by the venom duct.

It localises to the secreted. Its function is as follows. Tyrosine-rich conopeptide that targets several channels/receptors that are expressed in Xenopus oocytes. These targets are the voltage-gated potassium channels Kv1.6/KCNA6 (IC(50) is 170 nM) and Kv1.2/KCNA2 (IC(50) is 2.0 uM), Nav1.2/SCN2A (30% of inhibition), and N-methyl-D-aspartate (NMDA) receptor (GRIN1/GRIN2A/GRIN3B and GRIN1/GRIN2B/GRIN3B) (15% of inhibition). In vivo, causes the marine worm N.virens to move very slowly in contrast to control worms, and causes seizures (at 5 nmol) and death (20 nmol) to mice when intracranially injected. This chain is Conopeptide Y-Pl1, found in Conus planorbis (Planorbis cone).